Consider the following 157-residue polypeptide: Cytochrome c-type biogenesis protein CcmE (157 aa).

The Cytoplasmic segment spans residues 1–8 (MNPLRRKR). The helical; Signal-anchor for type II membrane protein transmembrane segment at 9 to 29 (LLIILAVLGGVGLALTLALSA) threads the bilayer. At 30–157 (LKENINLFYT…ASMPARQADR (128 aa)) the chain is on the periplasmic side. His-124 and Tyr-128 together coordinate heme. A disordered region spans residues 132–157 (EVSKALRESGQATPAPASMPARQADR).

This sequence belongs to the CcmE/CycJ family.

It is found in the cell inner membrane. Heme chaperone required for the biogenesis of c-type cytochromes. Transiently binds heme delivered by CcmC and transfers the heme to apo-cytochromes in a process facilitated by CcmF and CcmH. In Pseudomonas syringae pv. tomato (strain ATCC BAA-871 / DC3000), this protein is Cytochrome c-type biogenesis protein CcmE.